Consider the following 296-residue polypeptide: uncharacterized protein (296 aa).

A helical transmembrane segment spans residues 1–21 (MIFAVVDILEISIQLLCILLF).

The protein localises to the membrane. This is an uncharacterized protein from Caenorhabditis elegans.